A 198-amino-acid polypeptide reads, in one-letter code: Putative glutathione S-transferase alpha-2 (198 aa).

Ser-2 carries the N-acetylserine modification. In terms of domain architecture, GST N-terminal spans 5–81; it reads SVPSLTYFQG…YIAKKHNFMG (77 aa). Residues Tyr-11, Arg-45, 52–53, and 65–66 contribute to the glutathione site; these read QL and QS. Residues 83–198 form the GST C-terminal domain; sequence NLEEEFLVDQ…YIKERPETKF (116 aa).

This sequence belongs to the GST superfamily. Alpha family.

It carries out the reaction RX + glutathione = an S-substituted glutathione + a halide anion + H(+). Its function is as follows. Conjugation of reduced glutathione to a wide number of exogenous and endogenous hydrophobic electrophiles. The protein is Putative glutathione S-transferase alpha-2 (gsta2-1) of Dictyostelium discoideum (Social amoeba).